Consider the following 164-residue polypeptide: Two-component response regulator ARR16 (164 aa).

The Response regulatory domain occupies 30–160; sequence HVLAVDDNLI…DVEKLKCHLM (131 aa). The residue at position 93 (aspartate 93) is a 4-aspartylphosphate.

The protein belongs to the ARR family. Type-A subfamily. Two-component system major event consists of a His-to-Asp phosphorelay between a sensor histidine kinase (HK) and a response regulator (RR). In plants, the His-to-Asp phosphorelay involves an additional intermediate named Histidine-containing phosphotransfer protein (HPt). This multistep phosphorelay consists of a His-Asp-His-Asp sequential transfer of a phosphate group between first a His and an Asp of the HK protein, followed by the transfer to a conserved His of the HPt protein and finally the transfer to an Asp in the receiver domain of the RR protein.

Its subcellular location is the nucleus. Its function is as follows. Functions as a response regulator involved in His-to-Asp phosphorelay signal transduction system. Phosphorylation of the Asp residue in the receiver domain activates the ability of the protein to promote the transcription of target genes. Type-A response regulators seem to act as negative regulators of the cytokinin signaling. The sequence is that of Two-component response regulator ARR16 (ARR16) from Arabidopsis thaliana (Mouse-ear cress).